The sequence spans 106 residues: UPF0060 membrane protein Bxeno_B1021 (106 aa).

4 helical membrane-spanning segments follow: residues 2–22 (KTFL…YLPW), 30–50 (SIWL…LLTL), 58–78 (VYAA…WCVD), and 82–102 (PTLW…IIAF).

Belongs to the UPF0060 family.

It is found in the cell inner membrane. This is UPF0060 membrane protein Bxeno_B1021 from Paraburkholderia xenovorans (strain LB400).